The chain runs to 30 residues: Cytochrome b6-f complex subunit 8 (30 aa).

A helical transmembrane segment spans residues 4-24; the sequence is IISLGWGSLLAIFSFSIALVV.

Belongs to the PetN family. As to quaternary structure, the 4 large subunits of the cytochrome b6-f complex are cytochrome b6, subunit IV (17 kDa polypeptide, PetD), cytochrome f and the Rieske protein, while the 4 small subunits are PetG, PetL, PetM and PetN. The complex functions as a dimer.

The protein localises to the plastid. It localises to the chloroplast thylakoid membrane. Its function is as follows. Component of the cytochrome b6-f complex, which mediates electron transfer between photosystem II (PSII) and photosystem I (PSI), cyclic electron flow around PSI, and state transitions. The sequence is that of Cytochrome b6-f complex subunit 8 from Gracilaria tenuistipitata var. liui (Red alga).